Consider the following 348-residue polypeptide: Phenylalanine--tRNA ligase alpha subunit (348 aa).

Glu259 is a Mg(2+) binding site.

Belongs to the class-II aminoacyl-tRNA synthetase family. Phe-tRNA synthetase alpha subunit type 1 subfamily. As to quaternary structure, tetramer of two alpha and two beta subunits. Requires Mg(2+) as cofactor.

Its subcellular location is the cytoplasm. The enzyme catalyses tRNA(Phe) + L-phenylalanine + ATP = L-phenylalanyl-tRNA(Phe) + AMP + diphosphate + H(+). The sequence is that of Phenylalanine--tRNA ligase alpha subunit from Ligilactobacillus salivarius (strain UCC118) (Lactobacillus salivarius).